Consider the following 506-residue polypeptide: Histidine ammonia-lyase (506 aa).

A cross-link (5-imidazolinone (Ala-Gly)) is located at residues 143–145; sequence ASG. Serine 144 carries the 2,3-didehydroalanine (Ser) modification.

The protein belongs to the PAL/histidase family. Post-translationally, contains an active site 4-methylidene-imidazol-5-one (MIO), which is formed autocatalytically by cyclization and dehydration of residues Ala-Ser-Gly.

Its subcellular location is the cytoplasm. It catalyses the reaction L-histidine = trans-urocanate + NH4(+). Its pathway is amino-acid degradation; L-histidine degradation into L-glutamate; N-formimidoyl-L-glutamate from L-histidine: step 1/3. This Salmonella typhi protein is Histidine ammonia-lyase.